A 1382-amino-acid chain; its full sequence is Suppressor of organelle fusion 2 (1382 aa).

Positions 229–463 (RIPLDEATSN…QLFNRPHPIR (235 aa)) constitute a BEACH domain. 2 WD repeats span residues 1094–1133 (GHQE…DEIG) and 1140–1176 (KHTR…LLAQ).

The protein belongs to the WD repeat WDR81 family. In terms of assembly, interacts with sorf-1; the interaction is direct. Interacts with bec-1.

The protein resides in the early endosome. It is found in the late endosome. The protein localises to the cytoplasm. In terms of biological role, together with sorf-1 negatively regulates the levels of phosphatidylinositol 3-phosphate (PtdIns3P) to enable the conversion of early endosomes to late endosomes. Binds to sorf-1 and the sorf-1-sorf-2 complex likely acts through bec-1, a non-catalytic subunit of phosphatidylinositol 3-kinase (PI3K), to suppress PI3K activity, thereby negatively regulating endosomal PtdIns3P levels. In Caenorhabditis elegans, this protein is Suppressor of organelle fusion 2.